A 2084-amino-acid polypeptide reads, in one-letter code: MAP kinase-activating death domain protein (2084 aa).

In terms of domain architecture, uDENN spans 25 to 352; the sequence is TPPMPKGLQG…VPVPGSTRVE (328 aa). Residues 117–253 are disordered; sequence PSSAAGSAGA…SPRASRKRTK (137 aa). Over residues 118–131 the composition is skewed to low complexity; it reads SSAAGSAGAGNDRP. Gly residues predominate over residues 132–152; it reads GNGGPGGHGGGAGGGAGGGGR. A compositionally biased stretch (basic and acidic residues) spans 160-173; it reads FRRESWRKSMERSS. Residues 174 to 183 are compositionally biased toward low complexity; sequence DSAFSSDYRS. Basic and acidic residues predominate over residues 189 to 204; it reads DSDRELTSRRDSDQQR. Positions 205–215 are enriched in basic residues; it reads LHSHHSHHQPH. The span at 234-245 shows a compositional bias: polar residues; that stretch reads DSESGGSHSPSP. A cDENN domain is found at 373 to 514; the sequence is RFSLVDFPLH…EGTILKNHLK (142 aa). One can recognise a dDENN domain in the interval 516 to 678; that stretch reads ALTSMTATNT…EWSLTPTNVA (163 aa). Disordered regions lie at residues 557-588, 730-749, 811-863, 891-963, 1058-1092, 1115-1188, and 1305-1382; these read TPPH…NSPA, QPTD…SSSY, VASK…TVGS, QESD…SQSS, HSAG…GNNF, FGKK…AENQ, and SSSL…GQST. Residues 558 to 588 are compositionally biased toward polar residues; that stretch reads PPHSAQASQRNSMSAQGTISSRQPSPMNSPA. The span at 824–839 shows a compositional bias: low complexity; the sequence is SPVSSSSSRSDLSSPS. Residues 913-925 show a composition bias toward basic and acidic residues; that stretch reads HPSDSESRPEKKI. The segment covering 946 to 963 has biased composition (low complexity); sequence GSSGSSSSSPGRQSSQSS. Over residues 1121 to 1131 the composition is skewed to low complexity; it reads QKQVPVQQKQP. A compositionally biased stretch (basic and acidic residues) spans 1168–1183; it reads TQEELTRQQNQERSHS. Positions 1305-1315 are enriched in low complexity; the sequence is SSSLLSSHAAS. Composition is skewed to polar residues over residues 1324-1353 and 1370-1382; these read RSPS…STQL and RLSS…GQST. In terms of domain architecture, Death spans 1490-1565; sequence GMDQGPIEMM…GLVYSQEVHN (76 aa). Over residues 1794–1842 the composition is skewed to low complexity; that stretch reads DIHAQQKQKHQQQQQHQQPQQQQQPHQTTTQQNQPTAVASAVPTTTAPA. Disordered stretches follow at residues 1794–1865 and 1896–2084; these read DIHA…RHTV and VPVP…HRKH. A compositionally biased stretch (polar residues) spans 1845 to 1858; sequence VNPNRMTAKSQAGS. The span at 1896–1907 shows a compositional bias: pro residues; sequence VPVPPTPAPPTS. Polar residues predominate over residues 1921-1932; the sequence is SQPSTESLASIS. Pro residues-rich tracts occupy residues 1933–1953 and 1983–1993; these read SPPP…PAIP and QYTPQPPPPFV. Composition is skewed to low complexity over residues 2001 to 2029 and 2059 to 2077; these read LARA…HSQS and ISGS…ASAS.

It belongs to the MADD family.

Its subcellular location is the cell membrane. The protein localises to the cytoplasm. In terms of biological role, guanyl-nucleotide exchange factor that regulates small GTPases. Converts GDP-bound inactive form of Rab3 to the GTP-bound active forms. This is MAP kinase-activating death domain protein from Drosophila melanogaster (Fruit fly).